Reading from the N-terminus, the 214-residue chain is U3 small nucleolar RNA-associated protein 16 (214 aa).

The span at 1–10 (MSNGHVKFDA) shows a compositional bias: basic and acidic residues. The tract at residues 1-106 (MSNGHVKFDA…KSVNETEVTD (106 aa)) is disordered. The residue at position 16 (S16) is a Phosphoserine. The span at 22–41 (DRQDDVLVISKKDKEVHSSS) shows a compositional bias: basic and acidic residues. Residues 42-52 (DEESDDDDAPQ) show a composition bias toward acidic residues. Phosphoserine is present on residues S45, S65, and S144. Positions 54-75 (EGLHSGKSEVESQITQREEAIR) are enriched in basic and acidic residues. The interval 182 to 214 (STTQDSKTLPPKKESSIIRSKDRWLNRKALNKG) is disordered. A compositionally biased stretch (basic and acidic residues) spans 192–206 (PKKESSIIRSKDRWL).

This sequence belongs to the UTP16 family. Part of the small subunit (SSU) processome composed of at least 40 protein subunits and the RNA chaperone small nucleolar RNA (snoRNA) U3. Interacts with snoRNA U3. Interacts with MPP10.

The protein resides in the nucleus. Its subcellular location is the nucleolus. Functions as part of the small subunit (SSU) processome, first precursor of the small eukaryotic ribosomal subunit that coordinates the first two steps of ribosome biogenesis in transcription of the primary transcript pre-RNA and pre-18S processing. During the assembly of the SSU processome in the nucleolus, many ribosome biogenesis factors, an RNA chaperone and ribosomal proteins associate with the nascent pre-rRNA and work in concert to generate RNA folding, modifications, rearrangements and cleavage as well as targeted degradation of pre-ribosomal RNA by the RNA exosome. Has a role in bud site selection maybe via the regulation of expression of bipolar budding components. The polypeptide is U3 small nucleolar RNA-associated protein 16 (BUD21) (Saccharomyces cerevisiae (strain ATCC 204508 / S288c) (Baker's yeast)).